We begin with the raw amino-acid sequence, 162 residues long: Endoribonuclease YbeY (162 aa).

Zn(2+) is bound by residues His-117, His-121, and His-127.

The protein belongs to the endoribonuclease YbeY family. It depends on Zn(2+) as a cofactor.

It localises to the cytoplasm. In terms of biological role, single strand-specific metallo-endoribonuclease involved in late-stage 70S ribosome quality control and in maturation of the 3' terminus of the 16S rRNA. The polypeptide is Endoribonuclease YbeY (Francisella tularensis subsp. tularensis (strain WY96-3418)).